Reading from the N-terminus, the 478-residue chain is Ubiquitin carboxyl-terminal hydrolase calypso (478 aa).

Residues 11–239 enclose the UCH catalytic domain; sequence GWLELESDPG…IRFNLMAVVP (229 aa). The Nucleophile role is filled by cysteine 97. Residue histidine 176 is the Proton donor of the active site. Positions 400-428 constitute a ULD domain; sequence NYDEFICTFLSMLAHQGELGDLVSQHLIT. A positively charged C-terminal tail required for binding nucleosomes region spans residues 430 to 478; sequence RKPNMGSVQNSGSRGVVRNYNKKTTTNGSSPKTPSSKRRRGRTKYRKRK. The segment covering 432–442 has biased composition (polar residues); sequence PNMGSVQNSGS. The segment at 432–478 is disordered; that stretch reads PNMGSVQNSGSRGVVRNYNKKTTTNGSSPKTPSSKRRRGRTKYRKRK. Positions 464–478 are enriched in basic residues; it reads SSKRRRGRTKYRKRK.

This sequence belongs to the peptidase C12 family. BAP1 subfamily. Catalytic component of the polycomb repressive deubiquitinase (PR-DUB) complex, at least composed of caly/calypso, Asx and sba (MBD5/6 homolog). The PR-DUB complex associates with nucleosomes to mediate deubiquitination of histone H2AK118ub1 substrates; the association requires the positively charged C-terminal tail of caly, probably due to direct binding of DNA. Interacts (via ULD domain) with Asx (via DEUBAD domain); the interaction produces a stable heterodimer with a composite binding site for ubiquitin. Homodimerizes (via coiled-coil hinge-region between the UCH and ULD domains) to mediate assembly of 2 copies of the caly-Asx heterodimer into a bisymmetric tetramer; dimerization enhances PR-DUB association with nucleosomes.

Its subcellular location is the nucleus. The enzyme catalyses Thiol-dependent hydrolysis of ester, thioester, amide, peptide and isopeptide bonds formed by the C-terminal Gly of ubiquitin (a 76-residue protein attached to proteins as an intracellular targeting signal).. Functionally, catalytic component of the polycomb repressive deubiquitinase (PR-DUB) complex, a complex that specifically mediates deubiquitination of histone H2A monoubiquitinated at 'Lys-119' (H2AK118ub1). Mediates bisymmetric organization of the PR-DUB complex and is involved in association with nucleosomes to mediate deubiquitination. Does not deubiquitinate monoubiquitinated histone H2B. Required to maintain the transcriptionally repressive state of homeotic genes throughout development. The PR-DUB complex has weak or no activity toward 'Lys-48'- and 'Lys-63'-linked polyubiquitin chains. Polycomb group (PcG) protein. The sequence is that of Ubiquitin carboxyl-terminal hydrolase calypso from Aedes aegypti (Yellowfever mosquito).